The following is a 101-amino-acid chain: Large ribosomal subunit protein uL24 (101 aa).

Belongs to the universal ribosomal protein uL24 family. As to quaternary structure, part of the 50S ribosomal subunit.

One of two assembly initiator proteins, it binds directly to the 5'-end of the 23S rRNA, where it nucleates assembly of the 50S subunit. Functionally, one of the proteins that surrounds the polypeptide exit tunnel on the outside of the subunit. This Clostridioides difficile (strain 630) (Peptoclostridium difficile) protein is Large ribosomal subunit protein uL24.